The sequence spans 161 residues: Nucleotide-binding protein Gbem_0619 (161 aa).

Belongs to the YajQ family.

Nucleotide-binding protein. This chain is Nucleotide-binding protein Gbem_0619, found in Citrifermentans bemidjiense (strain ATCC BAA-1014 / DSM 16622 / JCM 12645 / Bem) (Geobacter bemidjiensis).